The chain runs to 243 residues: Orotidine 5'-phosphate decarboxylase (243 aa).

Residues aspartate 18, lysine 39, 66–75 (DLKFHDIPAT), threonine 130, arginine 192, glutamine 201, glycine 221, and arginine 222 contribute to the substrate site. The Proton donor role is filled by lysine 68.

The protein belongs to the OMP decarboxylase family. Type 1 subfamily. In terms of assembly, homodimer.

The enzyme catalyses orotidine 5'-phosphate + H(+) = UMP + CO2. It functions in the pathway pyrimidine metabolism; UMP biosynthesis via de novo pathway; UMP from orotate: step 2/2. In terms of biological role, catalyzes the decarboxylation of orotidine 5'-monophosphate (OMP) to uridine 5'-monophosphate (UMP). This chain is Orotidine 5'-phosphate decarboxylase, found in Synechococcus sp. (strain WH7803).